Here is a 316-residue protein sequence, read N- to C-terminus: GTP cyclohydrolase FolE2 1 (316 aa).

Belongs to the GTP cyclohydrolase IV family.

It carries out the reaction GTP + H2O = 7,8-dihydroneopterin 3'-triphosphate + formate + H(+). Its pathway is cofactor biosynthesis; 7,8-dihydroneopterin triphosphate biosynthesis; 7,8-dihydroneopterin triphosphate from GTP: step 1/1. Functionally, converts GTP to 7,8-dihydroneopterin triphosphate. The sequence is that of GTP cyclohydrolase FolE2 1 from Burkholderia lata (strain ATCC 17760 / DSM 23089 / LMG 22485 / NCIMB 9086 / R18194 / 383).